Consider the following 77-residue polypeptide: Coiled-coil-helix-coiled-coil-helix domain-containing protein C550.01c (77 aa).

The CHCH domain maps to 24 to 65 (KGGCVEEHLRLNDCYWDTHDWRKCTEQMEEFRKCWEKRHGPL). Short sequence motifs (cx9C motif) lie at residues 27–37 (CVEEHLRLNDC) and 47–57 (CTEQMEEFRKC). 2 disulfides stabilise this stretch: Cys27/Cys57 and Cys37/Cys47.

It localises to the cytoplasm. It is found in the nucleus. The protein is Coiled-coil-helix-coiled-coil-helix domain-containing protein C550.01c of Schizosaccharomyces pombe (strain 972 / ATCC 24843) (Fission yeast).